The sequence spans 126 residues: MFEGFKTFVMRGNVIDLAVGVVIGTAFSAVVNSLVNDILMAIVATLIGQPDFSDVLVFGAVRLGAFITTIVNFLIISAALYFLVVVPINKLSEFTRRNEPPPAPPAPSAEEKLLTEIRDLLRQNIT.

Helical transmembrane passes span 14 to 34 (VIDL…VNSL) and 66 to 86 (FITT…LVVV).

It belongs to the MscL family. Homopentamer.

It is found in the cell membrane. Its function is as follows. Channel that opens in response to stretch forces in the membrane lipid bilayer. May participate in the regulation of osmotic pressure changes within the cell. This is Large-conductance mechanosensitive channel from Roseiflexus sp. (strain RS-1).